A 419-amino-acid polypeptide reads, in one-letter code: D(4) dopamine receptor (419 aa).

Over M1–G29 the chain is Extracellular. N-linked (GlcNAc...) asparagine glycosylation is present at N3. A helical membrane pass occupies residues L30–A50. Topologically, residues G51 to S71 are cytoplasmic. A helical transmembrane segment spans residues F72 to V92. A Na(+)-binding site is contributed by D80. Residues Y93–A110 lie on the Extracellular side of the membrane. C108 and C185 are oxidised to a cystine. The chain crosses the membrane as a helical span at residues L111 to V131. D115 provides a ligand contact to (2R,3R)-nemonapride. Residue S122 coordinates Na(+). Residues D132–Q152 are Cytoplasmic-facing. A helical transmembrane segment spans residues L153 to G173. Over L174–Y192 the chain is Extracellular. A helical transmembrane segment spans residues V193–W213. S196 contacts (2R,3R)-nemonapride. Residues A214 to R346 are Cytoplasmic-facing. Residues L230–P264 form a disordered region. The span at P238 to P254 shows a compositional bias: pro residues. Residues P249–P264 form a 1; approximate repeat. The tract at residues P249–P312 is 4 X 16 AA approximate tandem repeats of [PA]-A-P-G-L-P-[PQR]-[DG]-P-C-G-P-D-C-A-P. Repeat copies occupy residues P265 to P280 and A281 to P296. The stretch at P297–P312 is one 4; approximate repeat. The segment at R317 to K336 is disordered. The helical transmembrane segment at V347–I367 threads the bilayer. The Extracellular segment spans residues T368–V382. C372 and C375 are oxidised to a cystine. A helical membrane pass occupies residues S383–F403. The Cytoplasmic segment spans residues N404 to C419. C419 carries the S-palmitoyl cysteine lipid modification.

The protein belongs to the G-protein coupled receptor 1 family. Forms homo- and heterooligomers with DRD2. D4.7 allele exhibits higher affinity for homodimers compared to DRD2 heterodimers, while alleles D42. and 4.4 have similar affinities for both. The interaction with DRD2 may modulate agonist-induced downstream signaling. Interacts with CLIC6. Interacts with GPRASP1. May interact with ADORA2A. Interacts with KLHL12. Polyubiquitinated by the BCR(KLHL12) E3 ubiquitin ligase complex: polyubiquitination does not lead to degradation of DRD4 protein. In terms of processing, palmitoylated. Palmitoylation of the C-terminal Cys is important for normal expression at the cell membrane. In terms of tissue distribution, highly expressed in retina. Detected at much lower levels in brain, in amygdala, thalamus, hypothalamus, cerebellum and pituitary.

The protein resides in the cell membrane. With respect to regulation, signaling in response to agonists such as dopamine, epinephrine and norepinephrine is modulated by Na(+); lower Na(+) levels result in higher receptor activity (in vitro). Dopamine receptor responsible for neuronal signaling in the mesolimbic system of the brain, an area of the brain that regulates emotion and complex behavior. Activated by dopamine, but also by epinephrine and norepinephrine, and by numerous synthetic agonists and drugs. Agonist binding triggers signaling via G proteins that inhibit adenylyl cyclase. Modulates the circadian rhythm of contrast sensitivity by regulating the rhythmic expression of NPAS2 in the retinal ganglion cells. The protein is D(4) dopamine receptor (DRD4) of Homo sapiens (Human).